Consider the following 231-residue polypeptide: 7-cyano-7-deazaguanine synthase (231 aa).

Residue 8-18 (FSGGQDSTTCL) coordinates ATP. Zn(2+) is bound by residues Cys188, Cys197, Cys200, and Cys203.

This sequence belongs to the QueC family. The cofactor is Zn(2+).

The enzyme catalyses 7-carboxy-7-deazaguanine + NH4(+) + ATP = 7-cyano-7-deazaguanine + ADP + phosphate + H2O + H(+). Its pathway is purine metabolism; 7-cyano-7-deazaguanine biosynthesis. Catalyzes the ATP-dependent conversion of 7-carboxy-7-deazaguanine (CDG) to 7-cyano-7-deazaguanine (preQ(0)). The sequence is that of 7-cyano-7-deazaguanine synthase from Salmonella arizonae (strain ATCC BAA-731 / CDC346-86 / RSK2980).